Consider the following 848-residue polypeptide: Protein NETWORKED 2C (848 aa).

The NAB domain occupies 10 to 90; sequence YSWWWASHVR…ERYDHISKEL (81 aa). The disordered stretch occupies residues 108-141; the sequence is FAMNEDDDDDAPVSPRHHKNKTSNKNVPKVPDLP. Coiled coils occupy residues 172–204, 241–278, 305–454, and 752–797; these read LSKTEAVEEIDKLQKEILVLQTEKEFVKTSYEN, EAQILMSTTALKSCQEKLEELRDKQEQNVKEVDVSRKQ, SEKE…KATN, and AKFE…SEEF.

Belongs to the NET family.

Its function is as follows. Plant-specific actin binding protein. May be part of a membrane-cytoskeletal adapter complex. This chain is Protein NETWORKED 2C, found in Arabidopsis thaliana (Mouse-ear cress).